We begin with the raw amino-acid sequence, 456 residues long: 5-hydroxytryptamine receptor 3E (456 aa).

An N-terminal signal peptide occupies residues 1–25; the sequence is MEGSWFHRKRFSFYLLLGFLLQGRG. The Extracellular segment spans residues 26–248; that stretch reads VTFTINCSGF…FYVAIRRRPS (223 aa). Cys-162 and Cys-176 are joined by a disulfide. Asn-175 is a glycosylation site (N-linked (GlcNAc...) asparagine). A helical membrane pass occupies residues 249–269; sequence LYVINLLVPSGFLVAIDALSF. Topologically, residues 270-282 are cytoplasmic; it reads YLPVKSGNRVPFK. The chain crosses the membrane as a helical span at residues 283 to 303; that stretch reads ITLLLGYNVFLLMMSDLLPTS. Topologically, residues 304–307 are extracellular; that stretch reads GTPL. Residues 308–328 traverse the membrane as a helical segment; that stretch reads IGVYFALCLSLMVGSLLETIF. The Cytoplasmic segment spans residues 329-433; that stretch reads ITHLLHVATT…WLQFSHAMDA (105 aa). The tract at residues 401–432 is HA-stretch; determines single-channel conductance in 5-HT3 receptors; the sequence is TGGSEWTRAQREHEAQKQHSVELWLQFSHAMD. A helical membrane pass occupies residues 434–454; sequence MLFRLYLLFMASSIITVICLW. Residues 455-456 are Extracellular-facing; that stretch reads NT.

It belongs to the ligand-gated ion channel (TC 1.A.9) family. 5-hydroxytryptamine receptor (TC 1.A.9.2) subfamily. HTR3E sub-subfamily. Forms homopentameric as well as heteropentameric serotonin-activated cation-selective channel complexes with HTR3A. The homomeric complex is not functional. Heteropentameric complexes display properties which resemble that of neuronal serotonin-activated channels in vivo. As to expression, expressed in adult colon and intestine.

It localises to the postsynaptic cell membrane. The protein resides in the cell membrane. The catalysed reaction is Na(+)(in) = Na(+)(out). It catalyses the reaction K(+)(in) = K(+)(out). It carries out the reaction Ca(2+)(in) = Ca(2+)(out). Functionally, forms serotonin (5-hydroxytryptamine/5-HT3)-activated cation-selective channel complexes, which when activated cause fast, depolarizing responses in neurons. The chain is 5-hydroxytryptamine receptor 3E from Homo sapiens (Human).